Consider the following 197-residue polypeptide: GTP cyclohydrolase-2 (197 aa).

A GTP-binding site is contributed by 50–54; it reads RIHSE. Zn(2+)-binding residues include C55, C66, and C68. Residues Q71, 93 to 95, and T115 contribute to the GTP site; that span reads EGR. The active-site Proton acceptor is D127. R129 acts as the Nucleophile in catalysis. Positions 150 and 155 each coordinate GTP.

It belongs to the GTP cyclohydrolase II family. It depends on Zn(2+) as a cofactor.

It catalyses the reaction GTP + 4 H2O = 2,5-diamino-6-hydroxy-4-(5-phosphoribosylamino)-pyrimidine + formate + 2 phosphate + 3 H(+). The protein operates within cofactor biosynthesis; riboflavin biosynthesis; 5-amino-6-(D-ribitylamino)uracil from GTP: step 1/4. Functionally, catalyzes the conversion of GTP to 2,5-diamino-6-ribosylamino-4(3H)-pyrimidinone 5'-phosphate (DARP), formate and pyrophosphate. The sequence is that of GTP cyclohydrolase-2 from Tolumonas auensis (strain DSM 9187 / NBRC 110442 / TA 4).